A 358-amino-acid polypeptide reads, in one-letter code: Peptide chain release factor 1 (358 aa).

Glutamine 237 carries the post-translational modification N5-methylglutamine.

This sequence belongs to the prokaryotic/mitochondrial release factor family. In terms of processing, methylated by PrmC. Methylation increases the termination efficiency of RF1.

The protein resides in the cytoplasm. Functionally, peptide chain release factor 1 directs the termination of translation in response to the peptide chain termination codons UAG and UAA. The protein is Peptide chain release factor 1 of Streptomyces coelicolor (strain ATCC BAA-471 / A3(2) / M145).